The following is a 590-amino-acid chain: Beta-fructofuranosidase, cell wall isozyme (590 aa).

The N-terminal stretch at 1–28 (MGTRPRGVVLAPWAVVLVLVLALRLAGA) is a signal peptide. The active site involves Asp-68. 2 N-linked (GlcNAc...) asparagine glycosylation sites follow: Asn-190 and Asn-341.

This sequence belongs to the glycosyl hydrolase 32 family.

It localises to the secreted. Its subcellular location is the cell wall. The catalysed reaction is Hydrolysis of terminal non-reducing beta-D-fructofuranoside residues in beta-D-fructofuranosides.. The protein is Beta-fructofuranosidase, cell wall isozyme of Zea mays (Maize).